Here is a 453-residue protein sequence, read N- to C-terminus: Cysteine--tRNA ligase (453 aa).

Cys30 contacts Zn(2+). The short motif at 32-42 (PTVYDRAHLGN) is the 'HIGH' region element. Residues Cys212, His237, and Glu241 each contribute to the Zn(2+) site. Residues 268-272 (KMSKS) carry the 'KMSKS' region motif. Residue Lys271 participates in ATP binding.

The protein belongs to the class-I aminoacyl-tRNA synthetase family. In terms of assembly, monomer. Zn(2+) is required as a cofactor.

It is found in the cytoplasm. The catalysed reaction is tRNA(Cys) + L-cysteine + ATP = L-cysteinyl-tRNA(Cys) + AMP + diphosphate. This is Cysteine--tRNA ligase from Jannaschia sp. (strain CCS1).